The chain runs to 251 residues: Triosephosphate isomerase (251 aa).

Substrate is bound at residue asparagine 10 to lysine 12. Histidine 98 acts as the Electrophile in catalysis. Glutamate 169 acts as the Proton acceptor in catalysis. Substrate contacts are provided by residues glycine 175, serine 213, and glycine 234 to glycine 235.

Belongs to the triosephosphate isomerase family. Homodimer.

The protein resides in the cytoplasm. The catalysed reaction is D-glyceraldehyde 3-phosphate = dihydroxyacetone phosphate. The protein operates within carbohydrate biosynthesis; gluconeogenesis. It participates in carbohydrate degradation; glycolysis; D-glyceraldehyde 3-phosphate from glycerone phosphate: step 1/1. In terms of biological role, involved in the gluconeogenesis. Catalyzes stereospecifically the conversion of dihydroxyacetone phosphate (DHAP) to D-glyceraldehyde-3-phosphate (G3P). The protein is Triosephosphate isomerase of Paracidovorax citrulli (strain AAC00-1) (Acidovorax citrulli).